Here is a 617-residue protein sequence, read N- to C-terminus: Secretogranin-2 (617 aa).

A signal peptide spans 1-30 (MAGAKAYRLGAVLLLIHLIFLISGAEAASF). Tyr153 is subject to Sulfotyrosine. Residues Ser176 and Ser270 each carry the phosphoserine modification. Composition is skewed to basic and acidic residues over residues 261-286 (TQTQEEVRDSKENTEKNEQINEEMKR) and 295-307 (EENRRESKDQLSE). The disordered stretch occupies residues 261-307 (TQTQEEVRDSKENTEKNEQINEEMKRSGQLGLPDEENRRESKDQLSE). Phosphoserine occurs at positions 434, 532, 555, and 556.

This sequence belongs to the chromogranin/secretogranin protein family. As to quaternary structure, interacts with Secretogranin III/SCG3.

The protein resides in the secreted. In terms of biological role, neuroendocrine protein of the granin family that regulates the biogenesis of secretory granules. This chain is Secretogranin-2 (Scg2), found in Mus musculus (Mouse).